Reading from the N-terminus, the 304-residue chain is Dihydroorotate dehydrogenase B (NAD(+)), catalytic subunit (304 aa).

Residues Ser-20 and 44–45 contribute to the FMN site; that span reads KA. Residues Lys-44 and 68-72 each bind substrate; that span reads NAIGL. FMN-binding residues include Asn-98 and Asn-126. Asn-126 contributes to the substrate binding site. Cys-129 (nucleophile) is an active-site residue. The FMN site is built by Lys-164 and Ile-190. Position 191 to 192 (191 to 192) interacts with substrate; the sequence is NT. Residues Gly-216, 242–243, and 264–265 contribute to the FMN site; these read GG and GT.

It belongs to the dihydroorotate dehydrogenase family. Type 1 subfamily. As to quaternary structure, heterotetramer of 2 PyrK and 2 PyrD type B subunits. It depends on FMN as a cofactor.

The protein localises to the cytoplasm. It catalyses the reaction (S)-dihydroorotate + NAD(+) = orotate + NADH + H(+). It functions in the pathway pyrimidine metabolism; UMP biosynthesis via de novo pathway; orotate from (S)-dihydroorotate (NAD(+) route): step 1/1. Catalyzes the conversion of dihydroorotate to orotate with NAD(+) as electron acceptor. This is Dihydroorotate dehydrogenase B (NAD(+)), catalytic subunit (pyrD) from Oceanobacillus iheyensis (strain DSM 14371 / CIP 107618 / JCM 11309 / KCTC 3954 / HTE831).